The primary structure comprises 360 residues: DNA replication and repair protein RecF (360 aa).

Position 30-37 (30-37) interacts with ATP; it reads GQNGSGKT.

It belongs to the RecF family.

It localises to the cytoplasm. Its function is as follows. The RecF protein is involved in DNA metabolism; it is required for DNA replication and normal SOS inducibility. RecF binds preferentially to single-stranded, linear DNA. It also seems to bind ATP. The polypeptide is DNA replication and repair protein RecF (Shewanella sp. (strain MR-4)).